A 115-amino-acid polypeptide reads, in one-letter code: Ig heavy chain V-III region J606 (115 aa).

The 114-residue stretch at 1–114 (EVKLEESGGG…WGQGTLVTVS (114 aa)) folds into the Ig-like domain. Cysteine 22 and cysteine 98 are oxidised to a cystine.

This is Ig heavy chain V-III region J606 from Mus musculus (Mouse).